We begin with the raw amino-acid sequence, 383 residues long: Adaptive-response sensory kinase SasA (383 aa).

The region spanning 152-365 (MVAHELRTPL…CFTFTVPIWQ (214 aa)) is the Histidine kinase domain. A Phosphohistidine; by autocatalysis modification is found at histidine 155.

As to quaternary structure, homooligomerizes. Interacts with KaiC. Participates in the KaiABC clock complex, whose core is composed of a KaiC homohexamer, 6 KaiB and up to 6 KaiA dimers. SasA and KaiB(fs) compete to bind to KaiC.

It catalyses the reaction ATP + protein L-histidine = ADP + protein N-phospho-L-histidine.. Its function is as follows. Member of the two-component regulatory system SasA/RpaA involved in genome-wide circadian gene expression. One of several clock output pathways. Participates in the Kai clock protein complex, the main circadian regulator in cyanobacteria, via its interaction with KaiC. KaiC enhances the autophosphorylation activity of SasA, which then transfers its phosphate group to RpaA to activate it. In addition to its output function, recruits fold-shifted KaiB (KaiB(fs)) to KaiC to cooperatively form the KaiB(6):KaiC(6) complex (independent of SasA kinase activity). Required for robustness of the circadian rhythm of gene expression and is involved in clock output, also required for adaptation to light/dark cycles. The chain is Adaptive-response sensory kinase SasA from Parasynechococcus marenigrum (strain WH8102).